A 338-amino-acid polypeptide reads, in one-letter code: MRFWFVLLALLGKEIYAYENERNALNATAANKVCGLSTYLKGIAHRVNSESAVVTEKLSDLKMRSIQLQLSVMRNRVPSGEQDCKDIRTLLKTVLRNEFTFQQELEEMRNASALAAAAAGIAAGRLEEWIFVFAQAAGGSSQFCISVGTNIPAEYNNLQECFDGTIGPETLYKIEDSRVKESAQKSLQLHEVLSSISFSSLGAESIVEKGENRGCNLMRTADGGLLKDVCLNRNFTWGGGVLNFGYCVAGNLKIKGGEYGDVGSHDAVRWTEDPSKVSIFKDVIRLFARFQEVKNAVVKKIKTTVDELTKCIGQKEAELTNDQLYEEFEVIQKYLWFL.

An N-terminal signal peptide occupies residues 1-17; that stretch reads MRFWFVLLALLGKEIYA. Residues N26 and N110 are each glycosylated (N-linked (GlcNAc...) asparagine). Cystine bridges form between C34/C161, C84/C311, C144/C215, and C230/C247. An N-linked (GlcNAc...) asparagine glycan is attached at N234.

As to quaternary structure, heterodimer composed of ESAG6 and ESAG7. N-glycosylated. Glycosylation is dispensable for heterodimer formation and host transferrin binding.

It localises to the cell membrane. The protein localises to the flagellar pocket. Functionally, transferrin receptor subunit involved in receptor-mediated acquisition of iron from the environment by binding host TF/transferrin. The sequence is that of Transferrin receptor subunit ESAG7 from Trypanosoma brucei brucei.